A 719-amino-acid chain; its full sequence is B3 domain-containing protein Os03g0120900 (719 aa).

Positions 7-110 (HHHFIKVMVG…HFMVLPFGLN (104 aa)) form a DNA-binding region, TF-B3. 2 disordered regions span residues 328–381 (RGSF…RSEQ) and 412–443 (EEPQ…RNAV). Over residues 351–366 (DSAENTLKERSEERQP) the composition is skewed to basic and acidic residues. Over residues 416–430 (HNQGENEGNLDQVNN) the composition is skewed to polar residues.

The protein resides in the nucleus. The sequence is that of B3 domain-containing protein Os03g0120900 from Oryza sativa subsp. japonica (Rice).